We begin with the raw amino-acid sequence, 127 residues long: MARVKRAVNAHKKRRAILEAASGYRGQRSRLYRKAKEQVTHSLVYNYNDRKKRKGDFRQLWIQRINAAARANGMTYNRLIQGLKAANIEVDRKILAELAVNDAGAFAALVEVAQKALPSDVNAPKAA.

Belongs to the bacterial ribosomal protein bL20 family.

Binds directly to 23S ribosomal RNA and is necessary for the in vitro assembly process of the 50S ribosomal subunit. It is not involved in the protein synthesizing functions of that subunit. The chain is Large ribosomal subunit protein bL20 from Streptomyces avermitilis (strain ATCC 31267 / DSM 46492 / JCM 5070 / NBRC 14893 / NCIMB 12804 / NRRL 8165 / MA-4680).